The sequence spans 310 residues: Olfactory receptor 5P55 (310 aa).

Residues 1-25 (METQNHTTVTEFILLGLTESSTLRV) lie on the Extracellular side of the membrane. Residue Asn-5 is glycosylated (N-linked (GlcNAc...) asparagine). Residues 26-46 (ILFMVFLGIYTVTLVGNFSII) form a helical membrane-spanning segment. The Cytoplasmic portion of the chain corresponds to 47 to 54 (SLIRSCPQ). A helical transmembrane segment spans residues 55 to 75 (LHTPMYLFLSHLAFVDIGFST). The Extracellular segment spans residues 76-99 (SITPTMFKGFLGNRLVLSVAACIA). An intrachain disulfide couples Cys-97 to Cys-189. The chain crosses the membrane as a helical span at residues 100–120 (QFCITVTFGTVECFLLAVMAY). The Cytoplasmic segment spans residues 121 to 133 (DRYVAICSPLLYS). The chain crosses the membrane as a helical span at residues 134–154 (THMSPRICFLLVGASYVGGCV). The Extracellular segment spans residues 155 to 196 (NSGAFTSCLSILSFCGPNQIDHFFCDFPAVLKLSCSDVSIIG). A helical transmembrane segment spans residues 197–217 (IIPSISAGSIIVITVFVIAVS). The Cytoplasmic segment spans residues 218–237 (YAYILITILKMRSTEGRQKA). Residues 238 to 258 (FSTCTSHLTAVTLYYGTITFI) form a helical membrane-spanning segment. Topologically, residues 259–271 (YVMPKSNYSTAQN) are extracellular. Residue Asn-265 is glycosylated (N-linked (GlcNAc...) asparagine). Residues 272-292 (KILSVFYTVVIPMLNPLIYSL) form a helical membrane-spanning segment. At 293 to 310 (RNRDVKEALRKAIIRIFP) the chain is on the cytoplasmic side.

This sequence belongs to the G-protein coupled receptor 1 family.

It localises to the cell membrane. Functionally, potential odorant receptor. The sequence is that of Olfactory receptor 5P55 from Mus musculus (Mouse).